Reading from the N-terminus, the 160-residue chain is Myosin regulatory light chain, smooth muscle (160 aa).

Blocked amino end (Ser) is present on serine 1. Serine 11 is subject to Phosphoserine. 2 consecutive EF-hand domains span residues 20–55 (NQIQEMKEAFTMIDQNRDGLIDVSDLKEMYSNLGTA) and 88–123 (DPEETLRNAFQMFDSDNTGYIPEEYMKDLLENMGDN). Ca(2+) is bound by residues aspartate 33, asparagine 35, aspartate 37, and aspartate 44.

In molluscan muscle, calcium regulation is associated with myosin rather than with actin. Muscle myosin contains two types of light chains: the catalytic light chain, essential for ATPase activity, and the regulatory light chain, a calcium-binding protein responsible for Ca(2+) dependent binding and Ca(2+) dependent Mg-ATPase activity. This chain is Myosin regulatory light chain, smooth muscle, found in Spisula sachalinensis (Sakhalin surf-clam).